The primary structure comprises 556 residues: Bifunctional methyltransferase (556 aa).

An RF MTase region spans residues 1-310 (MQYSIQKFLN…NRVIEISLIQ (310 aa)). Residues 148–152 (GTGSG), Asp-171, Trp-200, and Asn-215 each bind S-adenosyl-L-methionine. 215 to 218 (NPPY) contacts substrate. Residues 313–556 (RSYARRIGKS…IITKIPPKSY (244 aa)) are tRNA MTase. Positions 348–399 (KNYNSCKIKSNYTKFNLEKSKESVSRGAERIKIREHLRTYKEDVANFSSSTS) are insert. Positions 403, 428, 455, and 477 each coordinate S-adenosyl-L-methionine. Asp-477 is a catalytic residue. Substrate is bound by residues Lys-481 and Asp-513.

The protein in the C-terminal section; belongs to the class I-like SAM-binding methyltransferase superfamily. TrmB family. In the N-terminal section; belongs to the protein N5-glutamine methyltransferase family. PrmC subfamily.

It carries out the reaction L-glutaminyl-[peptide chain release factor] + S-adenosyl-L-methionine = N(5)-methyl-L-glutaminyl-[peptide chain release factor] + S-adenosyl-L-homocysteine + H(+). It catalyses the reaction guanosine(46) in tRNA + S-adenosyl-L-methionine = N(7)-methylguanosine(46) in tRNA + S-adenosyl-L-homocysteine. Its function is as follows. Methylates the class 1 translation termination release factors RF1/PrfA and RF2/PrfB on the glutamine residue of the universally conserved GGQ motif. Catalyzes the formation of N(7)-methylguanine at position 46 (m7G46) in tRNA. In Rickettsia bellii (strain RML369-C), this protein is Bifunctional methyltransferase (prmC/trmB).